The primary structure comprises 551 residues: Putative transport protein HI_0035 (551 aa).

Transmembrane regions (helical) follow at residues 4 to 24 (IAIT…IGHW), 28 to 48 (GVGL…HFTN), 65 to 85 (FGLI…FFSS), 95 to 115 (AFAI…HKIA), and 157 to 177 (VSYA…MWLI). RCK C-terminal domains lie at 191–275 (RFNA…IIGH) and 277–360 (VDAP…VIGN). 6 helical membrane passes run 370 to 390 (MLPV…PFYI), 402 to 424 (AGGP…LYWF), 438 to 458 (IVLF…DTLV), 463 to 483 (LEWM…VGTI), 492 to 512 (YLTI…LAFA), and 529 to 549 (VYPL…VLLW).

The protein belongs to the AAE transporter (TC 2.A.81) family. YidE subfamily.

The protein localises to the cell membrane. This chain is Putative transport protein HI_0035, found in Haemophilus influenzae (strain ATCC 51907 / DSM 11121 / KW20 / Rd).